The chain runs to 192 residues: Orotate phosphoribosyltransferase (192 aa).

116-124 (EDIVTTGLS) is a 5-phospho-alpha-D-ribose 1-diphosphate binding site. Residues Thr120 and Arg148 each contribute to the orotate site.

It belongs to the purine/pyrimidine phosphoribosyltransferase family. PyrE subfamily. In terms of assembly, homodimer. The cofactor is Mg(2+).

The catalysed reaction is orotidine 5'-phosphate + diphosphate = orotate + 5-phospho-alpha-D-ribose 1-diphosphate. Its pathway is pyrimidine metabolism; UMP biosynthesis via de novo pathway; UMP from orotate: step 1/2. Functionally, catalyzes the transfer of a ribosyl phosphate group from 5-phosphoribose 1-diphosphate to orotate, leading to the formation of orotidine monophosphate (OMP). The polypeptide is Orotate phosphoribosyltransferase (Brucella anthropi (strain ATCC 49188 / DSM 6882 / CCUG 24695 / JCM 21032 / LMG 3331 / NBRC 15819 / NCTC 12168 / Alc 37) (Ochrobactrum anthropi)).